Here is a 328-residue protein sequence, read N- to C-terminus: Serine protease 27 (328 aa).

A signal peptide spans 1–22 (MRQPHIAALLLLPLLLRSGTEG). Residues 23–37 (ARTLRACGHPKMFNR) constitute a propeptide, activation peptide. In terms of domain architecture, Peptidase S1 spans 38–280 (MVGGENALEG…HHKWIHQIIP (243 aa)). Cys-63 and Cys-79 are oxidised to a cystine. The Charge relay system role is filled by His-78. A glycan (N-linked (GlcNAc...) asparagine) is linked at Asn-82. Catalysis depends on Asp-127, which acts as the Charge relay system. 3 disulfides stabilise this stretch: Cys-161–Cys-238, Cys-194–Cys-217, and Cys-228–Cys-256. Ser-232 functions as the Charge relay system in the catalytic mechanism.

Belongs to the peptidase S1 family.

The protein resides in the secreted. This Mus musculus (Mouse) protein is Serine protease 27 (Prss27).